The sequence spans 169 residues: Crossover junction endodeoxyribonuclease RuvC (169 aa).

Residues aspartate 13, glutamate 73, and aspartate 145 contribute to the active site. Aspartate 13, glutamate 73, and aspartate 145 together coordinate Mg(2+).

The protein belongs to the RuvC family. Homodimer which binds Holliday junction (HJ) DNA. The HJ becomes 2-fold symmetrical on binding to RuvC with unstacked arms; it has a different conformation from HJ DNA in complex with RuvA. In the full resolvosome a probable DNA-RuvA(4)-RuvB(12)-RuvC(2) complex forms which resolves the HJ. The cofactor is Mg(2+).

It is found in the cytoplasm. The enzyme catalyses Endonucleolytic cleavage at a junction such as a reciprocal single-stranded crossover between two homologous DNA duplexes (Holliday junction).. Its function is as follows. The RuvA-RuvB-RuvC complex processes Holliday junction (HJ) DNA during genetic recombination and DNA repair. Endonuclease that resolves HJ intermediates. Cleaves cruciform DNA by making single-stranded nicks across the HJ at symmetrical positions within the homologous arms, yielding a 5'-phosphate and a 3'-hydroxyl group; requires a central core of homology in the junction. The consensus cleavage sequence is 5'-(A/T)TT(C/G)-3'. Cleavage occurs on the 3'-side of the TT dinucleotide at the point of strand exchange. HJ branch migration catalyzed by RuvA-RuvB allows RuvC to scan DNA until it finds its consensus sequence, where it cleaves and resolves the cruciform DNA. The chain is Crossover junction endodeoxyribonuclease RuvC from Solidesulfovibrio magneticus (strain ATCC 700980 / DSM 13731 / RS-1) (Desulfovibrio magneticus).